The following is an 874-amino-acid chain: Alanine--tRNA ligase (874 aa).

The Zn(2+) site is built by His563, His567, Cys665, and His669.

It belongs to the class-II aminoacyl-tRNA synthetase family. Zn(2+) serves as cofactor.

Its subcellular location is the cytoplasm. It carries out the reaction tRNA(Ala) + L-alanine + ATP = L-alanyl-tRNA(Ala) + AMP + diphosphate. In terms of biological role, catalyzes the attachment of alanine to tRNA(Ala) in a two-step reaction: alanine is first activated by ATP to form Ala-AMP and then transferred to the acceptor end of tRNA(Ala). Also edits incorrectly charged Ser-tRNA(Ala) and Gly-tRNA(Ala) via its editing domain. This Aeromonas salmonicida (strain A449) protein is Alanine--tRNA ligase.